The following is a 382-amino-acid chain: Queuine tRNA-ribosyltransferase (382 aa).

The active-site Proton acceptor is the D96. Residues 96 to 100 (DSGGF), D151, Q194, and G221 contribute to the substrate site. An RNA binding region spans residues 252–258 (GVGAPDS). Catalysis depends on D271, which acts as the Nucleophile. Residues 276–280 (TRIAR) are RNA binding; important for wobble base 34 recognition. Zn(2+)-binding residues include C309, C311, C314, and H340.

This sequence belongs to the queuine tRNA-ribosyltransferase family. As to quaternary structure, homodimer. Within each dimer, one monomer is responsible for RNA recognition and catalysis, while the other monomer binds to the replacement base PreQ1. Zn(2+) is required as a cofactor.

It carries out the reaction 7-aminomethyl-7-carbaguanine + guanosine(34) in tRNA = 7-aminomethyl-7-carbaguanosine(34) in tRNA + guanine. It participates in tRNA modification; tRNA-queuosine biosynthesis. Its function is as follows. Catalyzes the base-exchange of a guanine (G) residue with the queuine precursor 7-aminomethyl-7-deazaguanine (PreQ1) at position 34 (anticodon wobble position) in tRNAs with GU(N) anticodons (tRNA-Asp, -Asn, -His and -Tyr). Catalysis occurs through a double-displacement mechanism. The nucleophile active site attacks the C1' of nucleotide 34 to detach the guanine base from the RNA, forming a covalent enzyme-RNA intermediate. The proton acceptor active site deprotonates the incoming PreQ1, allowing a nucleophilic attack on the C1' of the ribose to form the product. After dissociation, two additional enzymatic reactions on the tRNA convert PreQ1 to queuine (Q), resulting in the hypermodified nucleoside queuosine (7-(((4,5-cis-dihydroxy-2-cyclopenten-1-yl)amino)methyl)-7-deazaguanosine). The polypeptide is Queuine tRNA-ribosyltransferase (Lactococcus lactis subsp. cremoris (strain MG1363)).